Reading from the N-terminus, the 313-residue chain is tRNA-cytidine(32) 2-sulfurtransferase (313 aa).

A PP-loop motif motif is present at residues Ser-60–Ser-65. Residues Cys-135, Cys-138, and Cys-226 each coordinate [4Fe-4S] cluster.

Belongs to the TtcA family. Homodimer. Mg(2+) serves as cofactor. The cofactor is [4Fe-4S] cluster.

It localises to the cytoplasm. The enzyme catalyses cytidine(32) in tRNA + S-sulfanyl-L-cysteinyl-[cysteine desulfurase] + AH2 + ATP = 2-thiocytidine(32) in tRNA + L-cysteinyl-[cysteine desulfurase] + A + AMP + diphosphate + H(+). It participates in tRNA modification. Its function is as follows. Catalyzes the ATP-dependent 2-thiolation of cytidine in position 32 of tRNA, to form 2-thiocytidine (s(2)C32). The sulfur atoms are provided by the cysteine/cysteine desulfurase (IscS) system. This is tRNA-cytidine(32) 2-sulfurtransferase from Delftia acidovorans (strain DSM 14801 / SPH-1).